The following is a 331-amino-acid chain: L-lactate dehydrogenase A chain (331 aa).

NAD(+)-binding positions include 29-57 and Arg-98; that span reads GMVG…MEDK. 3 residues coordinate substrate: Arg-105, Asn-137, and Arg-168. Asn-137 provides a ligand contact to NAD(+). Catalysis depends on His-192, which acts as the Proton acceptor. Thr-247 provides a ligand contact to substrate.

The protein belongs to the LDH/MDH superfamily. LDH family. Homotetramer.

Its subcellular location is the cytoplasm. It carries out the reaction (S)-lactate + NAD(+) = pyruvate + NADH + H(+). The protein operates within fermentation; pyruvate fermentation to lactate; (S)-lactate from pyruvate: step 1/1. In terms of biological role, interconverts simultaneously and stereospecifically pyruvate and lactate with concomitant interconversion of NADH and NAD(+). The polypeptide is L-lactate dehydrogenase A chain (ldha) (Chaenocephalus aceratus (Blackfin icefish)).